The sequence spans 537 residues: Phosphoenolpyruvate carboxykinase (ATP) (537 aa).

The substrate site is built by Arg-61, Tyr-195, and Lys-201. ATP is bound by residues Lys-201, His-220, and 236–244 (GLSGTGKTT). Mn(2+) contacts are provided by Lys-201 and His-220. Mn(2+) is bound at residue Asp-257. Glu-285 provides a ligand contact to ATP. Residues 311–321 (PDFDNGSKTEN) are compositionally biased toward basic and acidic residues. The disordered stretch occupies residues 311-342 (PDFDNGSKTENTRSAYPLESIPNASPTGRAGQ). Arg-323 lines the substrate pocket. ATP contacts are provided by Arg-323 and Thr-448.

It belongs to the phosphoenolpyruvate carboxykinase (ATP) family. It depends on Mn(2+) as a cofactor.

The protein localises to the cytoplasm. The enzyme catalyses oxaloacetate + ATP = phosphoenolpyruvate + ADP + CO2. Its pathway is carbohydrate biosynthesis; gluconeogenesis. Its function is as follows. Involved in the gluconeogenesis. Catalyzes the conversion of oxaloacetate (OAA) to phosphoenolpyruvate (PEP) through direct phosphoryl transfer between the nucleoside triphosphate and OAA. This Rhodopseudomonas palustris (strain BisB5) protein is Phosphoenolpyruvate carboxykinase (ATP).